The primary structure comprises 70 residues: Myotoxin (70 aa).

The N-terminal stretch at 1–22 (MKILYLLFAFLFLAFLSEPGNA) is a signal peptide. 3 disulfide bridges follow: Cys-26–Cys-58, Cys-33–Cys-52, and Cys-40–Cys-59.

This sequence belongs to the crotamine-myotoxin family. In terms of assembly, monomer. As to expression, expressed by the venom gland.

The protein resides in the secreted. Cationic peptide that possesses multiple functions. It acts as a cell-penetrating peptide (CPP), and as a potent voltage-gated potassium channel (Kv) inhibitor. It exhibits antimicrobial activities, hind limb paralysis, and severe muscle necrosis by a non-enzymatic mechanism. This Crotalus helleri (Southern pacific rattlesnake) protein is Myotoxin.